Here is a 451-residue protein sequence, read N- to C-terminus: Epi-neemfruitin B 7-O-acetyltransferse L7AT (451 aa).

Active-site proton acceptor residues include histidine 165 and aspartate 384.

This sequence belongs to the plant acyltransferase family. Monomer. As to expression, mainly expressed in petioles and, to a lower extent, in roots.

The enzyme catalyses epi-neemfruitin B + acetyl-CoA = 7-acetyl-epi-neemfruitin B + CoA. It functions in the pathway secondary metabolite biosynthesis; terpenoid biosynthesis. Acetyltransferase involved in the biosynthesis of limonoids triterpene natural products such as azadirachtin, an antifeedant widely used as bioinsecticide, and possessing many medicinal applications including anti-tumoral, anti-malarial, anti-rheumatic, antibacterial, anti-inflammatory, anti-pyretic and diuretic effects. Catalyzes the formation of 7-acetyl-epi-neemfruitin B from epi-neemfruitin B. In Melia azedarach (Chinaberry tree), this protein is Epi-neemfruitin B 7-O-acetyltransferse L7AT.